Consider the following 219-residue polypeptide: Membrin-12 (219 aa).

A2 carries the N-acetylalanine modification. Residues A2–T197 are Cytoplasmic-facing. The chain crosses the membrane as a helical; Anchor for type IV membrane protein span at residues W198 to I215. Residues R216–R219 are Vesicular-facing.

The protein belongs to the GOSR2 family.

It is found in the golgi apparatus membrane. Its function is as follows. Involved in transport of proteins from the cis/medial-Golgi to the trans-Golgi network. In Arabidopsis thaliana (Mouse-ear cress), this protein is Membrin-12 (MEMB12).